A 575-amino-acid polypeptide reads, in one-letter code: Phosphoenolpyruvate-protein phosphotransferase (575 aa).

Tyrosine 122 is modified (phosphotyrosine). The active-site Tele-phosphohistidine intermediate is the histidine 189. Phosphoenolpyruvate-binding residues include arginine 296 and arginine 332. Mg(2+) contacts are provided by glutamate 431 and aspartate 455. Residues asparagine 454–aspartate 455 and arginine 465 each bind phosphoenolpyruvate. Catalysis depends on cysteine 502, which acts as the Proton donor.

This sequence belongs to the PEP-utilizing enzyme family. In terms of assembly, homodimer. Interacts with the pole-localizer protein TmaR. Binding to TmaR is reversible as long as TmaR can get phosphorylated, whereas binding to non-phosphorylated TmaR is very strong and shifts the equilibrium toward binding. The cofactor is Mg(2+). Post-translationally, phosphorylated on Tyr-122. Phosphorylation on Tyr-122 is important for polar localization but not for interaction with TmaR and for activity.

The protein localises to the cytoplasm. The enzyme catalyses L-histidyl-[protein] + phosphoenolpyruvate = N(pros)-phospho-L-histidyl-[protein] + pyruvate. With respect to regulation, inhibited by oxalate. Its function is as follows. General (non sugar-specific) component of the phosphoenolpyruvate-dependent sugar phosphotransferase system (sugar PTS). This major carbohydrate active-transport system catalyzes the phosphorylation of incoming sugar substrates concomitantly with their translocation across the cell membrane. Enzyme I transfers the phosphoryl group from phosphoenolpyruvate (PEP) to the phosphoryl carrier protein (HPr). Can also use (Z)-3-fluoro-PEP (ZFPEP), (Z)-3-methyl-PEP (ZMePEP), (Z)-3-chloro-PEP (ZClPEP) and (E)-3-chloro-PEP (EClPEP) as alternative phosphoryl donors. The protein is Phosphoenolpyruvate-protein phosphotransferase of Escherichia coli (strain K12).